The chain runs to 204 residues: Holliday junction branch migration complex subunit RuvA (204 aa).

Residues 1–64 (MISRMKGIIL…EDAQLLYGFH (64 aa)) are domain I. A domain II region spans residues 65–143 (HPKERAMFSE…NLNKNLFKST (79 aa)). The interval 144-155 (ADHMLSSVSTDL) is flexible linker. The segment at 156–204 (SAKSAEAEAISALISLGYKPQEAAQLIKNIAQPDLDSQALIKHALRSTL) is domain III.

It belongs to the RuvA family. Homotetramer. Forms an RuvA(8)-RuvB(12)-Holliday junction (HJ) complex. HJ DNA is sandwiched between 2 RuvA tetramers; dsDNA enters through RuvA and exits via RuvB. An RuvB hexamer assembles on each DNA strand where it exits the tetramer. Each RuvB hexamer is contacted by two RuvA subunits (via domain III) on 2 adjacent RuvB subunits; this complex drives branch migration. In the full resolvosome a probable DNA-RuvA(4)-RuvB(12)-RuvC(2) complex forms which resolves the HJ.

The protein resides in the cytoplasm. The RuvA-RuvB-RuvC complex processes Holliday junction (HJ) DNA during genetic recombination and DNA repair, while the RuvA-RuvB complex plays an important role in the rescue of blocked DNA replication forks via replication fork reversal (RFR). RuvA specifically binds to HJ cruciform DNA, conferring on it an open structure. The RuvB hexamer acts as an ATP-dependent pump, pulling dsDNA into and through the RuvAB complex. HJ branch migration allows RuvC to scan DNA until it finds its consensus sequence, where it cleaves and resolves the cruciform DNA. This is Holliday junction branch migration complex subunit RuvA from Hamiltonella defensa subsp. Acyrthosiphon pisum (strain 5AT).